The chain runs to 174 residues: MTPAGERPRVGVIMGSDSDWPVMADAAAALAEFDIPAEVRVVSAHRTPEAMFSYARGAAERGLEVIIAGAGGAAHLPGMVAAATPLPVIGVPVPLGRLDGLDSLLSIVQMPAGVPVATVSIGGAGNAGLLAVRMLGAANPQLRARIVAFQDRLADVVAAKDAELQRLAGKLTRD.

The substrate site is built by Ser16, Asp19, and Arg46.

This sequence belongs to the AIR carboxylase family. Class I subfamily.

The catalysed reaction is 5-carboxyamino-1-(5-phospho-D-ribosyl)imidazole + H(+) = 5-amino-1-(5-phospho-D-ribosyl)imidazole-4-carboxylate. The protein operates within purine metabolism; IMP biosynthesis via de novo pathway; 5-amino-1-(5-phospho-D-ribosyl)imidazole-4-carboxylate from 5-amino-1-(5-phospho-D-ribosyl)imidazole (N5-CAIR route): step 2/2. In terms of biological role, catalyzes the conversion of N5-carboxyaminoimidazole ribonucleotide (N5-CAIR) to 4-carboxy-5-aminoimidazole ribonucleotide (CAIR). This is N5-carboxyaminoimidazole ribonucleotide mutase from Mycobacterium tuberculosis (strain CDC 1551 / Oshkosh).